A 338-amino-acid chain; its full sequence is MTEKIAVLGAGSWGSILAGVLDENKNEVWLWTNKESQAKELNENHTNEHYIPGHKYSETIKATTNLKEAVDGASAVLFVVPTKVIRLVAQQLVEVLKELGQKPLIIHASKGLELGSHKRISEVIEEEIPSEYRKDVVVLSGPSHAEEVARKDITLITAACENLDSAKKVQSLFMNDYLRIYTNKDVIGVETGAAFKNVIAIGVGALHGLGYGDDAKAALMTRGLAEISRLGVAFGADPLTFIGLSGVGDLIVTCTSVHSRNWRAGNQLGKGKALDEVIQDMGMVIEGINTCKAAYELAQQKNIEMPITEAIYNVLYNGKDIKDEISLLMQREGKEEIK.

NADPH is bound by residues Ser-12, Trp-13, Lys-34, and Lys-110. Residues Lys-110, Gly-141, and Ser-143 each contribute to the sn-glycerol 3-phosphate site. Ala-145 serves as a coordination point for NADPH. Residues Lys-196, Asp-249, Ser-259, Arg-260, and Asn-261 each coordinate sn-glycerol 3-phosphate. Lys-196 (proton acceptor) is an active-site residue. NADPH is bound at residue Arg-260. NADPH is bound by residues Val-284 and Glu-286.

This sequence belongs to the NAD-dependent glycerol-3-phosphate dehydrogenase family.

The protein localises to the cytoplasm. The catalysed reaction is sn-glycerol 3-phosphate + NAD(+) = dihydroxyacetone phosphate + NADH + H(+). The enzyme catalyses sn-glycerol 3-phosphate + NADP(+) = dihydroxyacetone phosphate + NADPH + H(+). The protein operates within membrane lipid metabolism; glycerophospholipid metabolism. Its function is as follows. Catalyzes the reduction of the glycolytic intermediate dihydroxyacetone phosphate (DHAP) to sn-glycerol 3-phosphate (G3P), the key precursor for phospholipid synthesis. The protein is Glycerol-3-phosphate dehydrogenase [NAD(P)+] of Ligilactobacillus salivarius (strain UCC118) (Lactobacillus salivarius).